The chain runs to 181 residues: Adenylate kinase (181 aa).

ATP is bound at residue 10–15 (GAGKGT). The interval 30–59 (STGELFRSNIENGTKLGLEAKRYLDAGDLV) is NMP. AMP-binding positions include Thr31, Arg36, 57 to 59 (DLV), 85 to 88 (GFPR), and Gln92. An LID region spans residues 126 to 132 (ARGRADD). Arg127 is an ATP binding site. Residues Arg129 and Arg140 each coordinate AMP. Residue Gly166 participates in ATP binding.

The protein belongs to the adenylate kinase family. In terms of assembly, monomer.

It localises to the cytoplasm. The catalysed reaction is AMP + ATP = 2 ADP. The protein operates within purine metabolism; AMP biosynthesis via salvage pathway; AMP from ADP: step 1/1. Its function is as follows. Catalyzes the reversible transfer of the terminal phosphate group between ATP and AMP. Plays an important role in cellular energy homeostasis and in adenine nucleotide metabolism. In Mycolicibacterium paratuberculosis (strain ATCC BAA-968 / K-10) (Mycobacterium paratuberculosis), this protein is Adenylate kinase.